We begin with the raw amino-acid sequence, 491 residues long: MGQIVTFFQEVPHVIEEVMNIVLIALSVLAVLKGLYNFATCGLVGLVTFLLLCGRSCTTSLYKGVYELQTLELNMETLNMTMPLSCTKNNSHHYIMVGNETGLELTLTNTSIINHKFCNLSDAHKKNLYDHALMSIISTFHLSIPNFNQYEAMSCDFNGGKISVQYNLSHSYAGDAANHCGTVANGVLQTFMRMAWGGSYIALDSGRGNWDCIMTSYQYLIIQNTTWEDHCQFSRPSPIGYLGLLSQRTRDIYISRRLLGTFTWTLSDSEGKDTPGGYCLTRWMLIEAELKCFGNTAVAKCNEKHDEEFCDMLRLFDFNKQAIQRLKAEAQMSIQLINKAVNALINDQLIMKNHLRDIMGIPYCNYSKYWYLNHTTTGRTSLPKCWLVSNGSYLNETHFSDDIEQQADNMITEMLQKEYMERQGKTPLGLVDLFVFSTSFYLISIFLHLVKIPTHRHIVGKSCPKPHRLNHMGICSCGLYKQPGVPVKWKR.

Residue G2 is the site of N-myristoyl glycine; by host attachment. At 2–17 (GQIVTFFQEVPHVIEE) the chain is on the extracellular side. The helical transmembrane segment at 18–33 (VMNIVLIALSVLAVLK) threads the bilayer. Over 34-58 (GLYNFATCGLVGLVTFLLLCGRSCT) the chain is Cytoplasmic. C57 is a Zn(2+) binding site. At 59–432 (TSLYKGVYEL…QGKTPLGLVD (374 aa)) the chain is on the extracellular side. N-linked (GlcNAc...) asparagine; by host glycosylation is found at N79, N89, N99, N109, N119, and N167. Intrachain disulfides connect C86–C231, C118–C155, C180–C212, C279–C292, C301–C310, and C364–C385. A glycan (N-linked (GlcNAc...) asparagine; by host) is linked at N224. N-linked (GlcNAc...) asparagine; by host glycans are attached at residues N365, N373, N390, and N395. The chain crosses the membrane as a helical span at residues 433–453 (LFVFSTSFYLISIFLHLVKIP). Topologically, residues 454–491 (THRHIVGKSCPKPHRLNHMGICSCGLYKQPGVPVKWKR) are cytoplasmic. 6 residues coordinate Zn(2+): H455, H457, C463, H467, C475, and C477.

It belongs to the arenaviridae GPC protein family. As to quaternary structure, interacts with glycoprotein G2. Part of the GP complex (GP-C) together with glycoprotein G1 and glycoprotein G2. The GP-complex interacts with protein Z, which interacts with ribonucleocapsid; these interactions may induce virion budding. In terms of assembly, homotrimer; disulfide-linked. In pre-fusion state, G1 homotrimers bind G2 homotrimers via ionic interactions. Part of the GP complex (GP-C) together with glycoprotein G2 and the stable signal peptide. Interacts with the primary host receptor DAG1 on the cell surface; this interaction occurs at pH 8.0 but not at pH 6.0 and below. Upon virus internalization and at endosomal pH, interacts with the host lysosomal protein LAMP1; this interaction mediates G1 dissociation from GP-C and membrane fusion. The GP-complex interacts with protein Z, which interacts with ribonucleocapsid; these interactions may induce virion budding. Homotrimer. Interacts with the stable signal peptide. In pre-fusion state, G2 homotrimers bind G1 homotrimers via ionic interactions. Part of the GP complex (GP-C) together with glycoprotein G1 and the stable signal peptide. Acidification in the endosome triggers rearrangements, which ultimately leads to a 6 helix bundle formed by the two heptad repeat domains (HR1 and HR2) in post-fusion state. The GP-complex interacts with protein Z, which interacts with ribonucleocapsid; these interactions may induce virion budding. In terms of processing, specific enzymatic cleavages in vivo yield mature proteins. GP-C polyprotein is cleaved in the endoplasmic reticulum by the host protease MBTPS1. Only cleaved glycoprotein is incorporated into virions. The SSP remains stably associated with the GP complex following cleavage by signal peptidase and plays crucial roles in the trafficking of GP through the secretory pathway. Post-translationally, myristoylation is necessary for GP2-mediated fusion activity.

Its subcellular location is the virion membrane. It localises to the host endoplasmic reticulum membrane. The protein localises to the host Golgi apparatus membrane. It is found in the host cell membrane. Functions as a cleaved signal peptide that is retained as the third component of the GP complex (GP-C). Helps to stabilize the spike complex in its native conformation. The SSP is required for efficient glycoprotein expression, post-translational maturation cleavage of G1 and G2, glycoprotein transport to the cell surface plasma membrane, formation of infectious virus particles, and acid pH-dependent glycoprotein-mediated cell fusion. Its function is as follows. Forms the virion spikes together with glycoprotein G2. The glycoprotein spike trimers are connected to the underlying matrix. Interacts with the host receptor. Mediates virus attachment to the host primary receptor alpha-dystroglycan DAG1 (alpha-DG) at the cell surface. This attachment induces virion internalization apparently through macropinocytosis. Following endocytosis, there is a pH-dependent switch from binding DAG1 to the host lysosomal receptor LAMP1. This latter binding triggers the dissociation of GP1, exposing the fusion subunit, GP2, such that fusion can occur. Down-modulates host DAG1. In terms of biological role, forms the virion spikes together with glycoprotein G1. The glycoprotein spike trimers are connected to the underlying matrix. Class I viral fusion protein that directs fusion of viral and host endosomal membranes, leading to delivery of the nucleocapsid into the cytoplasm. Membrane fusion is mediated by irreversible conformational changes induced by acidification. This is Pre-glycoprotein polyprotein GP complex from Homo sapiens (Human).